Consider the following 333-residue polypeptide: F420-dependent glucose-6-phosphate dehydrogenase (333 aa).

A coenzyme F420-(gamma-Glu)n-binding site is contributed by aspartate 37. Catalysis depends on histidine 38, which acts as the Proton donor. Residues threonine 74 and 105-106 (SG) contribute to the coenzyme F420-(gamma-Glu)n site. Glutamate 107 (proton acceptor) is an active-site residue. Coenzyme F420-(gamma-Glu)n-binding positions include asparagine 110, 174-175 (GG), and 177-178 (VV). Substrate-binding residues include threonine 192, lysine 195, lysine 256, and arginine 280.

It belongs to the F420-dependent glucose-6-phosphate dehydrogenase family. Homodimer.

The enzyme catalyses oxidized coenzyme F420-(gamma-L-Glu)(n) + D-glucose 6-phosphate + H(+) = 6-phospho-D-glucono-1,5-lactone + reduced coenzyme F420-(gamma-L-Glu)(n). In terms of biological role, catalyzes the coenzyme F420-dependent oxidation of glucose 6-phosphate (G6P) to 6-phosphogluconolactone. This Amycolatopsis mediterranei (strain U-32) protein is F420-dependent glucose-6-phosphate dehydrogenase.